We begin with the raw amino-acid sequence, 357 residues long: uncharacterized protein (357 aa).

S72 carries the post-translational modification Phosphoserine. Disordered regions lie at residues 79-98, 264-290, and 323-357; these read GVNE…RPSR, QKQL…GASV, and ISDE…EPLK. The segment covering 324-335 has biased composition (acidic residues); the sequence is SDEDEEDEEEDS.

This is an uncharacterized protein from Saccharomyces cerevisiae (strain ATCC 204508 / S288c) (Baker's yeast).